A 398-amino-acid chain; its full sequence is Acetate kinase (398 aa).

Asn7 is a Mg(2+) binding site. Lys14 is an ATP binding site. A substrate-binding site is contributed by Arg91. Asp148 (proton donor/acceptor) is an active-site residue. ATP is bound by residues 208-212 (HLGNG), 282-284 (DFR), and 330-334 (GVGEN). Residue Glu383 coordinates Mg(2+).

Belongs to the acetokinase family. As to quaternary structure, homodimer. Mg(2+) serves as cofactor. Mn(2+) is required as a cofactor.

The protein localises to the cytoplasm. The catalysed reaction is acetate + ATP = acetyl phosphate + ADP. It participates in metabolic intermediate biosynthesis; acetyl-CoA biosynthesis; acetyl-CoA from acetate: step 1/2. Functionally, catalyzes the formation of acetyl phosphate from acetate and ATP. Can also catalyze the reverse reaction. The polypeptide is Acetate kinase (Carboxydothermus hydrogenoformans (strain ATCC BAA-161 / DSM 6008 / Z-2901)).